The following is a 519-amino-acid chain: Ribonuclease Y (519 aa).

Residues 6-26 (VPFYLLIFLVGIGLGVLTFWA) traverse the membrane as a helical segment. The KH domain occupies 209-272 (TVCTVTIPNE…HIAKMALTEL (64 aa)). The HD domain occupies 335–428 (VLDHSLEVSH…CSAADAISAS (94 aa)).

Belongs to the RNase Y family.

Its subcellular location is the cell membrane. Endoribonuclease that initiates mRNA decay. This chain is Ribonuclease Y, found in Protochlamydia amoebophila (strain UWE25).